A 431-amino-acid chain; its full sequence is MNLSIVILAAGAGTRMKSKTPKVLHTLCGREMLYYVIKEAKKLSDDVSVVLFHESEMVKKSIEKYFSDIRYVIQDHVNYPGTGGALMGIEPKYQKILVLNGDMPLVEAEELKQFLRAGSDFVMSVLDLEDGSGYGRVVIHGGSVERIVEEKDATGEEKSLGTVNAGVYLFDRALLACYLPRLKNDNAQKEFYLTDVVEMARKDRLIVAPLFVKEENFKGVNSKADLAEAEAIMTGRIRRRWMREGVRMRLPETIYIDEGVKFVGECFIENGVSITGDSYIEESHIKAHSVIEESRVIRSDVGPMAHLRPQCEVTETHIGNFVEVKKSKLTGVKAGHLSYLGDCEVDEGSNIGAGVITCNYDGKKKHLTKIGKNVFVGSDSQLVAPVSIEDDSIIGAGSTITKNVKSGELALSRAKQENIAGFFARYFSSSK.

The pyrophosphorylase stretch occupies residues 1 to 223 (MNLSIVILAA…EENFKGVNSK (223 aa)). Residues 8–11 (LAAG), Lys22, Gln74, and 81–82 (GT) contribute to the UDP-N-acetyl-alpha-D-glucosamine site. Asp102 lines the Mg(2+) pocket. Residues Gly135, Glu149, Asn164, and Asn221 each contribute to the UDP-N-acetyl-alpha-D-glucosamine site. A Mg(2+)-binding site is contributed by Asn221. The linker stretch occupies residues 224–244 (ADLAEAEAIMTGRIRRRWMRE). The interval 245 to 431 (GVRMRLPETI…FFARYFSSSK (187 aa)) is N-acetyltransferase. UDP-N-acetyl-alpha-D-glucosamine contacts are provided by Arg308 and Lys325. His336 acts as the Proton acceptor in catalysis. Residues Tyr339 and Asn350 each coordinate UDP-N-acetyl-alpha-D-glucosamine. Residues Ala353, 359–360 (NY), Ser378, Ala396, and Arg413 each bind acetyl-CoA.

The protein in the N-terminal section; belongs to the N-acetylglucosamine-1-phosphate uridyltransferase family. It in the C-terminal section; belongs to the transferase hexapeptide repeat family. In terms of assembly, homotrimer. It depends on Mg(2+) as a cofactor.

It localises to the cytoplasm. The enzyme catalyses alpha-D-glucosamine 1-phosphate + acetyl-CoA = N-acetyl-alpha-D-glucosamine 1-phosphate + CoA + H(+). It catalyses the reaction N-acetyl-alpha-D-glucosamine 1-phosphate + UTP + H(+) = UDP-N-acetyl-alpha-D-glucosamine + diphosphate. It participates in nucleotide-sugar biosynthesis; UDP-N-acetyl-alpha-D-glucosamine biosynthesis; N-acetyl-alpha-D-glucosamine 1-phosphate from alpha-D-glucosamine 6-phosphate (route II): step 2/2. It functions in the pathway nucleotide-sugar biosynthesis; UDP-N-acetyl-alpha-D-glucosamine biosynthesis; UDP-N-acetyl-alpha-D-glucosamine from N-acetyl-alpha-D-glucosamine 1-phosphate: step 1/1. Its pathway is bacterial outer membrane biogenesis; LPS lipid A biosynthesis. In terms of biological role, catalyzes the last two sequential reactions in the de novo biosynthetic pathway for UDP-N-acetylglucosamine (UDP-GlcNAc). The C-terminal domain catalyzes the transfer of acetyl group from acetyl coenzyme A to glucosamine-1-phosphate (GlcN-1-P) to produce N-acetylglucosamine-1-phosphate (GlcNAc-1-P), which is converted into UDP-GlcNAc by the transfer of uridine 5-monophosphate (from uridine 5-triphosphate), a reaction catalyzed by the N-terminal domain. The sequence is that of Bifunctional protein GlmU from Wolinella succinogenes (strain ATCC 29543 / DSM 1740 / CCUG 13145 / JCM 31913 / LMG 7466 / NCTC 11488 / FDC 602W) (Vibrio succinogenes).